The following is a 297-amino-acid chain: uncharacterized protein (297 aa).

Belongs to the metallo-dependent hydrolases superfamily.

This is an uncharacterized protein from Sinorhizobium fredii (strain NBRC 101917 / NGR234).